The following is a 387-amino-acid chain: 3-ketoacyl-CoA thiolase (387 aa).

Residue C91 is the Acyl-thioester intermediate of the active site. Residues H343 and C373 each act as proton acceptor in the active site.

The protein belongs to the thiolase-like superfamily. Thiolase family. As to quaternary structure, heterotetramer of two alpha chains (FadB) and two beta chains (FadA).

It is found in the cytoplasm. The enzyme catalyses an acyl-CoA + acetyl-CoA = a 3-oxoacyl-CoA + CoA. Its pathway is lipid metabolism; fatty acid beta-oxidation. Catalyzes the final step of fatty acid oxidation in which acetyl-CoA is released and the CoA ester of a fatty acid two carbons shorter is formed. This chain is 3-ketoacyl-CoA thiolase, found in Salmonella choleraesuis (strain SC-B67).